The primary structure comprises 717 residues: RNA helicase NPH-II (717 aa).

The region spanning 193–384 (FEIFISKKNC…IYFKNIVEIY (192 aa)) is the Helicase ATP-binding domain. Position 206 to 213 (206 to 213 (GGTGIGKT)) interacts with ATP. Residues 331–334 (DEIH) carry the DEXH box motif. Residues 406 to 566 (ILKNYMPSVG…VFKYNNMDYY (161 aa)) form the Helicase C-terminal domain.

This sequence belongs to the DEAD box helicase family. DEAH subfamily. In terms of assembly, monomer.

The protein localises to the virion. It carries out the reaction ATP + H2O = ADP + phosphate + H(+). Its function is as follows. NTP-dependent helicase that catalyzes unidirectional unwinding of 3'tailed duplex RNAs and plays an important role during transcription of early mRNAs, presumably by preventing R-loop formation behind the elongating RNA polymerase. Might also play a role in the export of newly synthesized mRNA chains out of the core into the cytoplasm. Required for replication and propagation of viral particles. This Melanoplus sanguinipes (Migratory grasshopper) protein is RNA helicase NPH-II (NPH2).